A 279-amino-acid polypeptide reads, in one-letter code: DegV domain-containing protein SpyM3_1149 (279 aa).

Residues 4 to 278 (IKIVTDSSIT…EGAFAVMVRY (275 aa)) form the DegV domain. The hexadecanoate site is built by Thr62 and Ser95.

Functionally, may bind long-chain fatty acids, such as palmitate, and may play a role in lipid transport or fatty acid metabolism. In Streptococcus pyogenes serotype M3 (strain ATCC BAA-595 / MGAS315), this protein is DegV domain-containing protein SpyM3_1149.